The following is a 480-amino-acid chain: 3-isopropylmalate dehydratase large subunit (480 aa).

[4Fe-4S] cluster is bound by residues C360, C418, and C421.

Belongs to the aconitase/IPM isomerase family. LeuC type 1 subfamily. In terms of assembly, heterodimer of LeuC and LeuD. It depends on [4Fe-4S] cluster as a cofactor.

The enzyme catalyses (2R,3S)-3-isopropylmalate = (2S)-2-isopropylmalate. It functions in the pathway amino-acid biosynthesis; L-leucine biosynthesis; L-leucine from 3-methyl-2-oxobutanoate: step 2/4. Its function is as follows. Catalyzes the isomerization between 2-isopropylmalate and 3-isopropylmalate, via the formation of 2-isopropylmaleate. This Anaeromyxobacter dehalogenans (strain 2CP-1 / ATCC BAA-258) protein is 3-isopropylmalate dehydratase large subunit.